Here is a 132-residue protein sequence, read N- to C-terminus: MVMTDPIADMLTRIRNANMVRHEKVEIPASTIKKEIARILKEEGFIRDAEFVEDNKQGIIRVFLKYGAGNERVITGLKRISKPGLRVYAKNNEVPKVLGGLGCAIISTSTGVMTDKQARQAHVGGEVLAYIW.

It belongs to the universal ribosomal protein uS8 family. Part of the 30S ribosomal subunit. Contacts proteins S5 and S12.

In terms of biological role, one of the primary rRNA binding proteins, it binds directly to 16S rRNA central domain where it helps coordinate assembly of the platform of the 30S subunit. This is Small ribosomal subunit protein uS8 from Brevibacillus brevis (strain 47 / JCM 6285 / NBRC 100599).